Consider the following 121-residue polypeptide: UPF0212 protein VNG_0879C (121 aa).

The protein belongs to the UPF0212 family.

The polypeptide is UPF0212 protein VNG_0879C (Halobacterium salinarum (strain ATCC 700922 / JCM 11081 / NRC-1) (Halobacterium halobium)).